We begin with the raw amino-acid sequence, 347 residues long: Photosystem II protein D1 (347 aa).

3 helical membrane passes run 32–49 (YIGW…LATV), 121–136 (HFIL…EWEF), and 145–159 (WIFV…AASA). A chlorophyll a-binding site is contributed by His-121. Tyr-129 is a pheophytin a binding site. Residues Asp-173 and Glu-192 each coordinate [CaMn4O5] cluster. The chain crosses the membrane as a helical span at residues 200–221 (FHILGVAAVFGGSLFSAMHGSL). His-201 contributes to the chlorophyll a binding site. Residues His-218 and 267 to 268 (SF) contribute to the a quinone site. His-218 serves as a coordination point for Fe cation. His-275 lines the Fe cation pocket. Residues 277–291 (FLAAWPVIGIWFTAL) form a helical membrane-spanning segment. Residues His-335, Glu-336, Asp-345, and Ala-347 each coordinate [CaMn4O5] cluster.

This sequence belongs to the reaction center PufL/M/PsbA/D family. In terms of assembly, PSII is composed of 1 copy each of membrane proteins PsbA, PsbB, PsbC, PsbD, PsbE, PsbF, PsbH, PsbI, PsbJ, PsbK, PsbL, PsbM, PsbT, PsbX, PsbY, PsbZ, Psb30/Ycf12, at least 3 peripheral proteins of the oxygen-evolving complex and a large number of cofactors. It forms dimeric complexes. The D1/D2 heterodimer binds P680, chlorophylls that are the primary electron donor of PSII, and subsequent electron acceptors. It shares a non-heme iron and each subunit binds pheophytin, quinone, additional chlorophylls, carotenoids and lipids. D1 provides most of the ligands for the Mn4-Ca-O5 cluster of the oxygen-evolving complex (OEC). There is also a Cl(-1) ion associated with D1 and D2, which is required for oxygen evolution. The PSII complex binds additional chlorophylls, carotenoids and specific lipids. is required as a cofactor. Post-translationally, tyr-164 forms a radical intermediate that is referred to as redox-active TyrZ, YZ or Y-Z.

Its subcellular location is the plastid. The protein resides in the chloroplast thylakoid membrane. It catalyses the reaction 2 a plastoquinone + 4 hnu + 2 H2O = 2 a plastoquinol + O2. In terms of biological role, photosystem II (PSII) is a light-driven water:plastoquinone oxidoreductase that uses light energy to abstract electrons from H(2)O, generating O(2) and a proton gradient subsequently used for ATP formation. It consists of a core antenna complex that captures photons, and an electron transfer chain that converts photonic excitation into a charge separation. The D1/D2 (PsbA/PsbD) reaction center heterodimer binds P680, the primary electron donor of PSII as well as several subsequent electron acceptors. This chain is Photosystem II protein D1, found in Heterocapsa niei (Dinoflagellate).